We begin with the raw amino-acid sequence, 217 residues long: Acyl-homoserine-lactone synthase (217 aa).

Belongs to the autoinducer synthase family.

The catalysed reaction is a fatty acyl-[ACP] + S-adenosyl-L-methionine = an N-acyl-L-homoserine lactone + S-methyl-5'-thioadenosine + holo-[ACP] + H(+). Its function is as follows. Required for the synthesis of OHHL (N-(3-oxohexanoyl)-L-homoserine lactone), an autoinducer molecule which binds to ExpR and thus acts in virulence (soft rot disease) through the activation of genes for plant tissue macerating enzymes. The protein is Acyl-homoserine-lactone synthase (expI) of Pectobacterium parmentieri.